A 130-amino-acid polypeptide reads, in one-letter code: Capsid protein (130 aa).

The segment at 32 to 105 is viral RNA-binding; it reads EWISSNSRSQ…FATNDDCALI (74 aa).

This sequence belongs to the Leviviricetes capsid protein family. In terms of assembly, homodimer. The capsid proteins form dimers that assemble by group of 5. Twelve such pentamers are linked together with free dimers. The homodimers binds to the viral RNA via an operator hairpin, but also to many other RNA sequences in the viral genome; this interaction probably shifts the virus from the replicative to the assembly phase and ensures specific encapsidation of the viral genome.

It localises to the virion. Functionally, capsid protein self-assembles to form an icosahedral capsid with a T=3 symmetry, about 26 nm in diameter, and consisting of 89 capsid proteins dimers (178 capsid proteins). Involved in viral genome encapsidation through the interaction between a capsid protein dimer and the multiple packaging signals present in the RNA genome. The capsid also contains 1 copy of the A2 maturation protein. In terms of biological role, acts as a translational repressor of viral replicase synthesis late in infection. This latter function is the result of capsid protein interaction with an RNA hairpin which contains the replicase ribosome-binding site. The protein is Capsid protein of Enterobacteria phage fr (Bacteriophage fr).